Consider the following 301-residue polypeptide: Homoserine O-acetyltransferase (301 aa).

The active-site Acyl-thioester intermediate is Cys142. The substrate site is built by Lys163 and Ser192. His235 (proton acceptor) is an active-site residue. Residue Glu237 is part of the active site. Arg249 is a binding site for substrate.

Belongs to the MetA family.

It is found in the cytoplasm. The catalysed reaction is L-homoserine + acetyl-CoA = O-acetyl-L-homoserine + CoA. It functions in the pathway amino-acid biosynthesis; L-methionine biosynthesis via de novo pathway; O-acetyl-L-homoserine from L-homoserine: step 1/1. Its function is as follows. Transfers an acetyl group from acetyl-CoA to L-homoserine, forming acetyl-L-homoserine. This Bacillus thuringiensis subsp. konkukian (strain 97-27) protein is Homoserine O-acetyltransferase.